The following is a 563-amino-acid chain: Phospholipase B-like protein F (563 aa).

Residues 1-21 (MKIINSFVFIFVLLFVFNTNA) form the signal peptide. N-linked (GlcNAc...) asparagine glycans are attached at residues Asn-85, Asn-107, Asn-118, Asn-121, Asn-208, Asn-312, and Asn-537.

The protein belongs to the phospholipase B-like family.

The protein localises to the secreted. In terms of biological role, probable phospholipase. This is Phospholipase B-like protein F (plbF) from Dictyostelium discoideum (Social amoeba).